Consider the following 556-residue polypeptide: Cytochrome P450 4g1 (556 aa).

Residues glutamate 356 and cysteine 497 each contribute to the heme site.

This sequence belongs to the cytochrome P450 family. Heme is required as a cofactor.

Its subcellular location is the endoplasmic reticulum membrane. The protein resides in the microsome membrane. Its function is as follows. May be involved in the metabolism of insect hormones and in the breakdown of synthetic insecticides. The sequence is that of Cytochrome P450 4g1 (Cyp4g1) from Drosophila melanogaster (Fruit fly).